Consider the following 470-residue polypeptide: Cytochrome P450 monooxygenase sirC (470 aa).

Residues 12-34 (LRGMVVGTIMLLCYRYGLALSIL) form a helical membrane-spanning segment. N-linked (GlcNAc...) asparagine glycosylation is present at Asn399. Cys410 provides a ligand contact to heme.

Belongs to the cytochrome P450 family. The cofactor is heme.

Its subcellular location is the membrane. The protein operates within mycotoxin biosynthesis. Its function is as follows. Cytochrome P450 monooxygenase; part of the gene cluster that mediates the biosynthesis of sirodesmin PL, an epipolythiodioxopiperazine (ETP) characterized by a disulfide bridged cyclic dipeptide and that acts as a phytotoxin which is involved in the blackleg didease of canola. SirD catalyzes the O-prenylation of L-tyrosine (L-Tyr) in the presence of dimethylallyl diphosphate (DMAPP) to yield 4-O-dimethylallyl-L-Tyr, and therefore represents probably the first pathway-specific enzyme in the biosynthesis of sirodesmin PL. 4-O-dimethylallyl-L-Tyr, then undergoes condensation with L-Ser in a reaction catalyzed by the non-ribosomal peptide synthase sirP to form the diketopiperazine (DKP) backbone. Further bishydroxylation of the DKP performed by the cytochrome P450 monooxygenase sirC leads to the production of the intermediate phomamide. This step is essential to form the reactive thiol group required for toxicity of sirodesmin PL. The next steps of sirodesmin biosynthesis are not well understood yet, but some predictions could be made from intermediate compounds identification. Phomamide is converted into phomalizarine via oxidation, probably by sirT. Further oxidation, methylation (by sirM or sirN) and reduction steps convert phomalizarine to deacetyl sirodesmin. Finally, acetyltransferase sirH probably acetylates deacetyl sirodesmin to produce sirodesmin PL. The protein is Cytochrome P450 monooxygenase sirC of Leptosphaeria maculans (Blackleg fungus).